Reading from the N-terminus, the 361-residue chain is DNA replication and repair protein RecF (361 aa).

ATP is bound at residue 30 to 37 (GPNGSGKT).

The protein belongs to the RecF family.

Its subcellular location is the cytoplasm. Its function is as follows. The RecF protein is involved in DNA metabolism; it is required for DNA replication and normal SOS inducibility. RecF binds preferentially to single-stranded, linear DNA. It also seems to bind ATP. This chain is DNA replication and repair protein RecF, found in Yersinia pestis.